The following is a 121-amino-acid chain: Small ribosomal subunit protein uS13 (121 aa).

Residues 93–121 are disordered; sequence RGLPMRGQRTRTNARTRKGPRKAAQSLKK.

It belongs to the universal ribosomal protein uS13 family. As to quaternary structure, part of the 30S ribosomal subunit. Forms a loose heterodimer with protein S19. Forms two bridges to the 50S subunit in the 70S ribosome.

Its function is as follows. Located at the top of the head of the 30S subunit, it contacts several helices of the 16S rRNA. In the 70S ribosome it contacts the 23S rRNA (bridge B1a) and protein L5 of the 50S subunit (bridge B1b), connecting the 2 subunits; these bridges are implicated in subunit movement. Contacts the tRNAs in the A and P-sites. The sequence is that of Small ribosomal subunit protein uS13 from Albidiferax ferrireducens (strain ATCC BAA-621 / DSM 15236 / T118) (Rhodoferax ferrireducens).